The sequence spans 469 residues: uncharacterized protein (469 aa).

This is an uncharacterized protein from Treponema pallidum (strain Nichols).